A 303-amino-acid polypeptide reads, in one-letter code: uncharacterized protein (303 aa).

A run of 6 helical transmembrane segments spans residues 12 to 32 (GLPI…SGIL), 81 to 101 (ISSV…VLEF), 117 to 137 (ALAG…FDVI), 174 to 194 (CIAM…TCMS), 208 to 228 (IISG…LDVV), and 265 to 286 (FFKG…SWAA). Solcar repeat units follow at residues 17 to 105 (SPMY…FKSK), 111 to 195 (DRPL…CMSF), and 206 to 293 (SHII…GKEI).

The protein belongs to the mitochondrial carrier (TC 2.A.29) family.

The protein resides in the mitochondrion inner membrane. This is an uncharacterized protein from Schizosaccharomyces pombe (strain 972 / ATCC 24843) (Fission yeast).